Here is a 261-residue protein sequence, read N- to C-terminus: Lys-63-specific deubiquitinase BRCC36 (261 aa).

Residues 6–149 form the MPN domain; that stretch reads VHIQGDAFLV…YTCFQSVQAQ (144 aa). Residues His-92, His-94, and Asp-105 each coordinate Zn(2+). A JAMM motif motif is present at residues 92-105; the sequence is HSHPHITVWPSHVD.

Belongs to the peptidase M67A family. BRCC36 subfamily. In terms of assembly, component of the BRCA1-A complex, at least composed of brca1, bard1, uimc1/rap80, abraxas1, brcc3/brcc36, babam2 and babam1/nba1. In the BRCA1-A complex, interacts directly with ABRAXAS1 and babam2. Component of the BRISC complex, at least composed of ABRAXAS2, brcc3/brcc36, babam2 and babam1/nba1. Within the complex, interacts directly with abraxas2. Both the BRCA1-A complex and the BRISC complex bind polyubiquitin. It depends on Zn(2+) as a cofactor.

The protein localises to the nucleus. It localises to the cytoplasm. Its subcellular location is the cytoskeleton. It is found in the spindle pole. Functionally, metalloprotease that specifically cleaves 'Lys-63'-linked polyubiquitin chains. Does not have activity toward 'Lys-48'-linked polyubiquitin chains. Component of the BRCA1-A complex, a complex that specifically recognizes 'Lys-63'-linked ubiquitinated histones H2A and H2AX at DNA lesions sites, leading to target the brca1-bard1 heterodimer to sites of DNA damage at double-strand breaks (DSBs). In the BRCA1-A complex, it specifically removes 'Lys-63'-linked ubiquitin on histones H2A and H2AX, antagonizing the rnf8-dependent ubiquitination at double-strand breaks (DSBs). Catalytic subunit of the BRISC complex, a multiprotein complex that specifically cleaves 'Lys-63'-linked ubiquitin in various substrates. Mediates the specific 'Lys-63'-specific deubiquitination associated with the COP9 signalosome complex (CSN), via the interaction of the BRISC complex with the CSN complex. The BRISC complex is required for normal mitotic spindle assembly and microtubule attachment to kinetochores via its role in deubiquitinating numa1. Plays a role in interferon signaling via its role in the deubiquitination of the interferon receptor ifnar1; deubiquitination increases ifnar1 activity by enhancing its stability and cell surface expression. Acts as a regulator of the NLRP3 inflammasome by mediating deubiquitination of nlrp3. Down-regulates the response to bacterial lipopolysaccharide (LPS) via its role in ifnar1 deubiquitination. In Xenopus laevis (African clawed frog), this protein is Lys-63-specific deubiquitinase BRCC36 (brcc3).